The following is a 97-amino-acid chain: Co-chaperonin GroES (97 aa).

The protein belongs to the GroES chaperonin family. As to quaternary structure, heptamer of 7 subunits arranged in a ring. Interacts with the chaperonin GroEL.

It is found in the cytoplasm. Together with the chaperonin GroEL, plays an essential role in assisting protein folding. The GroEL-GroES system forms a nano-cage that allows encapsulation of the non-native substrate proteins and provides a physical environment optimized to promote and accelerate protein folding. GroES binds to the apical surface of the GroEL ring, thereby capping the opening of the GroEL channel. The chain is Co-chaperonin GroES from Buchnera aphidicola subsp. Pemphigus spyrothecae.